The chain runs to 663 residues: DNA ligase (663 aa).

Residues 31 to 35 (DFEFD), 80 to 81 (SL), and Glu110 each bind NAD(+). Lys112 (N6-AMP-lysine intermediate) is an active-site residue. The NAD(+) site is built by Arg133, Glu170, Lys285, and Lys309. The Zn(2+) site is built by Cys404, Cys407, Cys422, and Cys428. The region spanning 585 to 663 (FIDNKLAGKT…SEDEFLKMIE (79 aa)) is the BRCT domain.

It belongs to the NAD-dependent DNA ligase family. LigA subfamily. It depends on Mg(2+) as a cofactor. Mn(2+) is required as a cofactor.

The enzyme catalyses NAD(+) + (deoxyribonucleotide)n-3'-hydroxyl + 5'-phospho-(deoxyribonucleotide)m = (deoxyribonucleotide)n+m + AMP + beta-nicotinamide D-nucleotide.. In terms of biological role, DNA ligase that catalyzes the formation of phosphodiester linkages between 5'-phosphoryl and 3'-hydroxyl groups in double-stranded DNA using NAD as a coenzyme and as the energy source for the reaction. It is essential for DNA replication and repair of damaged DNA. This is DNA ligase from Azobacteroides pseudotrichonymphae genomovar. CFP2.